A 188-amino-acid polypeptide reads, in one-letter code: PRA1 family protein 3 (188 aa).

At methionine 1 the chain carries N-acetylmethionine. The Cytoplasmic portion of the chain corresponds to 1–35 (MDVNLAPLRAWDDFFPGSDRFARPDFRDISKWNNR). 2 consecutive transmembrane segments (helical) span residues 36-56 (VVSN…MMIS) and 57-77 (VVGF…VLVF). Residues 78-92 (TGFVWAAHNKDILRR) are Cytoplasmic-facing. The next 2 membrane-spanning stretches (helical) occupy residues 93 to 113 (MKKQ…YFLI) and 115 to 135 (MFGG…LMFI). Positions 103–117 (MVVMLASYFLISMFG) are required for homodimer formation and heterodimer formation with ARL6IP1. Residues 136-188 (HASLRLRNLKNKLENKMEGIGLKKTPMGIILDALEQQEDSINKFADYISKARE) lie on the Cytoplasmic side of the membrane. A targeting to endoplasmic reticulum membrane region spans residues 136-188 (HASLRLRNLKNKLENKMEGIGLKKTPMGIILDALEQQEDSINKFADYISKARE).

The protein belongs to the PRA1 family. Homodimer. Heterodimer with ARL6IP1. Forms multimers. Interacts with ARL6. Interacts with prenylated RAB1A and RAB3A. Interacts with SLC1A1/EAAC1. Interacts with RTN2 (via first transmembrane domain). Does not interact with VAMP1, VAMP2 or VAMP3. As to expression, ubiquitous. Most abundant in heart and brain. In the embryonic brain cortex, expressed in neurons and astrocytes.

The protein localises to the endoplasmic reticulum membrane. The protein resides in the cell membrane. It is found in the cytoplasm. Its subcellular location is the cytoskeleton. In terms of biological role, regulates intracellular concentrations of taurine and glutamate. Negatively modulates SLC1A1/EAAC1 glutamate transport activity by decreasing its affinity for glutamate in a PKC activity-dependent manner. Plays a role in the retention of SLC1A1/EAAC1 in the endoplasmic reticulum. This Rattus norvegicus (Rat) protein is PRA1 family protein 3 (Arl6ip5).